Consider the following 555-residue polypeptide: 6-phosphofructo-2-kinase/fructose-2,6-bisphosphatase 3 (555 aa).

The tract at residues 1 to 245 (MPLELTQSRV…VYYLMNIHVQ (245 aa)) is 6-phosphofructo-2-kinase. 42-50 (GLPARGKTY) serves as a coordination point for ATP. Beta-D-fructose 6-phosphate is bound by residues R75 and R99. D125 is an active-site residue. Beta-D-fructose 6-phosphate-binding residues include T127 and R133. C155 is an active-site residue. 164-169 (NIMEVK) is a binding site for ATP. 3 residues coordinate beta-D-fructose 6-phosphate: K169, R190, and Y194. A fructose-2,6-bisphosphatase region spans residues 246 to 555 (PRTIYLCRHG…CHIFSKFSPY (310 aa)). Position 253 (R253) interacts with beta-D-fructose 2,6-bisphosphate. H254 serves as the catalytic Tele-phosphohistidine intermediate. Residues N260 and G266 each contribute to the beta-D-fructose 2,6-bisphosphate site. E323 functions as the Proton donor/acceptor in the catalytic mechanism. The beta-D-fructose 2,6-bisphosphate site is built by Y334, R348, K352, Y363, Q389, and R393. Position 345–348 (345–348 (YALR)) interacts with ATP. Residues 389–393 (QAVLR) and Y425 each bind ATP. Residues 475–504 (KQDAKKGPNPLMRRNSVTPLASPEPTKKPR) form a disordered region. S490 is subject to Phosphoserine; by AMPK and PKA. T492 is modified (phosphothreonine). Position 496 is a phosphoserine (S496).

It in the C-terminal section; belongs to the phosphoglycerate mutase family. As to quaternary structure, homodimer. Forms a heterodimer with PFKFB2. Post-translationally, phosphorylation by AMPK stimulates activity.

It carries out the reaction beta-D-fructose 2,6-bisphosphate + H2O = beta-D-fructose 6-phosphate + phosphate. It catalyses the reaction beta-D-fructose 6-phosphate + ATP = beta-D-fructose 2,6-bisphosphate + ADP + H(+). Its function is as follows. Catalyzes both the synthesis and degradation of fructose 2,6-bisphosphate. This is 6-phosphofructo-2-kinase/fructose-2,6-bisphosphatase 3 (Pfkfb3) from Rattus norvegicus (Rat).